We begin with the raw amino-acid sequence, 264 residues long: Late embryogenesis abundant protein D-34 (264 aa).

A compositionally biased stretch (low complexity) spans 1 to 16 (MSQGQPRRPQQPAGQG). The disordered stretch occupies residues 1-23 (MSQGQPRRPQQPAGQGENQEPIK). SMP domains are found at residues 22–76 (IKYG…RNEQ), 138–194 (ITIG…AHNA), and 203–261 (IKLN…LNEN).

It belongs to the LEA type SMP family.

LEA proteins are late embryonic proteins abundant in higher plant seed embryos. There are two subsets of LEA proteins (5a and 5b), the first ones are expressed when the cotyledon weight reach 80 mg and the second set are expressed above 100 mg. The function of those proteins is not known. The protein is Late embryogenesis abundant protein D-34 of Gossypium hirsutum (Upland cotton).